The following is a 263-amino-acid chain: Putative TATA-binding protein pB263R (263 aa).

It belongs to the asfivirus B263R family.

Functionally, putative TATA-binding protein. In African swine fever virus (isolate Warthog/Namibia/Wart80/1980) (ASFV), this protein is Putative TATA-binding protein pB263R.